Here is a 129-residue protein sequence, read N- to C-terminus: Large ribosomal subunit protein bL17 (129 aa).

The protein belongs to the bacterial ribosomal protein bL17 family. As to quaternary structure, part of the 50S ribosomal subunit. Contacts protein L32.

The polypeptide is Large ribosomal subunit protein bL17 (Yersinia enterocolitica serotype O:8 / biotype 1B (strain NCTC 13174 / 8081)).